The following is a 436-amino-acid chain: MFDSTLNPLWQRYILAVQEEVKPALGCTEPISLALAAAVAAAELEGPVERVEAWVSPNLMKNGLGVTVPGTGMVGLPIAAALGALGGNANAGLEVLKDATAQAIADAKALLAAGKVSVKIQEPCNEILFSRAKVWNGEKWACVTIVGGHTNIVHIETHDGVVFTQQACVAEGEQESPLTVLSRTTLAEILKFVNEVPFAAIRFILDSAKLNCALSQEGLSGKWGLHIGATLEKQCERGLLAKDLSSSIVIRTSAASDARMGGATLPAMSNSGSGNQGITATMPVVVVAEHFGADDERLARALMLSHLSAIYIHNQLPRLSALCAATTAAMGAAAGMAWLVDGRYETISMAISSMIGDVSGMICDGASNSCAMKVSTSASAAWKAVLMALDDTAVTGNEGIVAHDVEQSIANLCALASHSMQQTDRQIIEIMASKAR.

The protein belongs to the UPF0597 family.

The sequence is that of UPF0597 protein YhaM from Escherichia coli (strain SE11).